We begin with the raw amino-acid sequence, 444 residues long: uncharacterized protein (444 aa).

The N-terminal 72 residues, 1 to 72 (MGFLTAAIRV…RPMWNVSFLR (72 aa)), are a transit peptide targeting the chloroplast. The tract at residues 77-107 (HSTPARETGDDDISKSENSSSQDGDSCTKLK) is disordered. A compositionally biased stretch (polar residues) spans 92–101 (SENSSSQDGD). In terms of domain architecture, CRM spans 175-272 (EILTPEEHFY…KNYVQPPTEI (98 aa)). Positions 292–355 (DALRAVRKYI…CLEDEQEEDE (64 aa)) form a coiled coil. Disordered regions lie at residues 344 to 364 (EECL…ATDS) and 392 to 426 (KFPA…PNFD). Acidic residues predominate over residues 346 to 357 (CLEDEQEEDEAG). The span at 406 to 426 (DLGKAKSEGEENDDDKSPNFD) shows a compositional bias: basic and acidic residues.

It is found in the plastid. The protein localises to the chloroplast. This is an uncharacterized protein from Arabidopsis thaliana (Mouse-ear cress).